Here is a 200-residue protein sequence, read N- to C-terminus: 3-isopropylmalate dehydratase small subunit (200 aa).

The protein belongs to the LeuD family. LeuD type 1 subfamily. Heterodimer of LeuC and LeuD.

It carries out the reaction (2R,3S)-3-isopropylmalate = (2S)-2-isopropylmalate. Its pathway is amino-acid biosynthesis; L-leucine biosynthesis; L-leucine from 3-methyl-2-oxobutanoate: step 2/4. In terms of biological role, catalyzes the isomerization between 2-isopropylmalate and 3-isopropylmalate, via the formation of 2-isopropylmaleate. In Sodalis glossinidius (strain morsitans), this protein is 3-isopropylmalate dehydratase small subunit.